A 319-amino-acid polypeptide reads, in one-letter code: tRNA uridine(34) hydroxylase (319 aa).

The region spanning 127-221 (KQEDTVIIDA…YGKDPEVQGE (95 aa)) is the Rhodanese domain. Residue Cys181 is the Cysteine persulfide intermediate of the active site.

The protein belongs to the TrhO family.

The catalysed reaction is uridine(34) in tRNA + AH2 + O2 = 5-hydroxyuridine(34) in tRNA + A + H2O. Catalyzes oxygen-dependent 5-hydroxyuridine (ho5U) modification at position 34 in tRNAs. The chain is tRNA uridine(34) hydroxylase from Bacillus anthracis (strain A0248).